We begin with the raw amino-acid sequence, 108 residues long: FK506-binding protein 1A (108 aa).

The segment at 1 to 20 (MGVEVQRISPGDGKNFPKPG) is disordered. The 89-residue stretch at 20 to 108 (GDTVSIHYTG…TFEVELLKIN (89 aa)) folds into the PPIase FKBP-type domain.

Belongs to the FKBP-type PPIase family. FKBP1 subfamily.

The protein resides in the cytoplasm. The enzyme catalyses [protein]-peptidylproline (omega=180) = [protein]-peptidylproline (omega=0). Its activity is regulated as follows. Inhibited by both FK506 and rapamycin. Functionally, PPIases accelerate the folding of proteins. It catalyzes the cis-trans isomerization of proline imidic peptide bonds in oligopeptides. This Emericella nidulans (strain FGSC A4 / ATCC 38163 / CBS 112.46 / NRRL 194 / M139) (Aspergillus nidulans) protein is FK506-binding protein 1A (fprA).